Consider the following 201-residue polypeptide: Large ribosomal subunit protein uL4 (201 aa).

Residues 44-68 form a disordered region; sequence KAQKTRSEVAGTTKKSKKQKGGGAR.

The protein belongs to the universal ribosomal protein uL4 family. As to quaternary structure, part of the 50S ribosomal subunit.

Its function is as follows. One of the primary rRNA binding proteins, this protein initially binds near the 5'-end of the 23S rRNA. It is important during the early stages of 50S assembly. It makes multiple contacts with different domains of the 23S rRNA in the assembled 50S subunit and ribosome. Forms part of the polypeptide exit tunnel. This is Large ribosomal subunit protein uL4 from Xanthomonas axonopodis pv. citri (strain 306).